The chain runs to 276 residues: MLMITSFANPRVAQAFVDYMATQGVILTIQQHNQSDIWLADESQAERVRGELARFIENPGDPRYLAASWQSGQTNSGLRYRRFPFLATLRERAGPVTWIVMLACVLVYIAMSLIGDQTVMVWLAWPFDPVLKFEVWRYFTHIFMHFSLMHILFNLLWWWYLGGAVEKRLGSGKLIVITVISALLSGYVQQKFSGPWFGGLSGVVYALMGYVWLRGERDPQSGIYLQRGLIIFALLWIVAGWFDWFGMSMANGAHIAGLIVGLAMAFVDTLNARKRT.

A run of 6 helical transmembrane segments spans residues 94 to 114 (GPVT…MSLI), 142 to 162 (IFMH…WYLG), 169 to 189 (LGSG…GYVQ), 192 to 212 (FSGP…GYVW), 229 to 249 (LIIF…GMSM), and 250 to 270 (ANGA…VDTL). Residue Ser-201 is the Nucleophile of the active site. His-254 is an active-site residue.

This sequence belongs to the peptidase S54 family.

Its subcellular location is the cell inner membrane. The catalysed reaction is Cleaves type-1 transmembrane domains using a catalytic dyad composed of serine and histidine that are contributed by different transmembrane domains.. Functionally, rhomboid-type serine protease that catalyzes intramembrane proteolysis. The chain is Rhomboid protease GlpG from Salmonella dublin (strain CT_02021853).